Here is a 450-residue protein sequence, read N- to C-terminus: Phosphoglucosamine mutase (450 aa).

Residue S104 is the Phosphoserine intermediate of the active site. Residues S104, D241, D243, and D245 each coordinate Mg(2+). Position 104 is a phosphoserine (S104).

The protein belongs to the phosphohexose mutase family. It depends on Mg(2+) as a cofactor. Activated by phosphorylation.

The enzyme catalyses alpha-D-glucosamine 1-phosphate = D-glucosamine 6-phosphate. Catalyzes the conversion of glucosamine-6-phosphate to glucosamine-1-phosphate. This chain is Phosphoglucosamine mutase, found in Renibacterium salmoninarum (strain ATCC 33209 / DSM 20767 / JCM 11484 / NBRC 15589 / NCIMB 2235).